The chain runs to 643 residues: Threonine--tRNA ligase (643 aa).

The region spanning 1 to 61 (MPIITLPDGS…TEDSKLEIIT (61 aa)) is the TGS domain. The catalytic stretch occupies residues 243–534 (DHRKIGKALD…ITEEYAGFFP (292 aa)). C334, H385, and H511 together coordinate Zn(2+).

This sequence belongs to the class-II aminoacyl-tRNA synthetase family. As to quaternary structure, homodimer. The cofactor is Zn(2+).

The protein localises to the cytoplasm. It carries out the reaction tRNA(Thr) + L-threonine + ATP = L-threonyl-tRNA(Thr) + AMP + diphosphate + H(+). Its function is as follows. Catalyzes the attachment of threonine to tRNA(Thr) in a two-step reaction: L-threonine is first activated by ATP to form Thr-AMP and then transferred to the acceptor end of tRNA(Thr). Also edits incorrectly charged L-seryl-tRNA(Thr). This is Threonine--tRNA ligase from Pasteurella multocida (strain Pm70).